The chain runs to 2570 residues: Stabilin-1 (2570 aa).

An N-terminal signal peptide occupies residues 1-25 (MAGPRGLLPLCLLAFCLAGFSFVRG). At 26–2478 (QVLFKGCDVK…LAPEAPPVAA (2453 aa)) the chain is on the extracellular side. 4 consecutive EGF-like domains span residues 110–148 (HECP…SACQ), 156–193 (FGPD…PHCD), 195–229 (ELPV…QGSE), and 232–271 (APNP…MVCL). 11 disulfides stabilise this stretch: Cys-112–Cys-126, Cys-120–Cys-136, Cys-138–Cys-147, Cys-160–Cys-171, Cys-164–Cys-181, Cys-183–Cys-192, Cys-199–Cys-210, Cys-204–Cys-217, Cys-236–Cys-247, Cys-241–Cys-257, and Cys-259–Cys-270. N-linked (GlcNAc...) asparagine glycosylation occurs at Asn-133. N-linked (GlcNAc...) asparagine glycans are attached at residues Asn-286, Asn-312, Asn-413, Asn-606, Asn-673, Asn-712, and Asn-745. FAS1 domains are found at residues 356–494 (YGHL…TGLR) and 506–641 (KRTI…DGIL). Residues 728–768 (DCTQCPGGFSNPCYGKGNCSDGIQGNGACLCFPDYKGIACH) form the EGF-like 5 domain. 3 disulfides stabilise this stretch: Cys-732–Cys-746, Cys-740–Cys-756, and Cys-758–Cys-767. N-linked (GlcNAc...) asparagine glycosylation occurs at Asn-816. EGF-like domains follow at residues 818–858 (SMGD…DGFS), 861–903 (PSNP…RVCV), 904–946 (AIDE…YQCS), and 947–986 (PIDP…DGFS). Cystine bridges form between Cys-822-Cys-837, Cys-831-Cys-846, Cys-865-Cys-879, Cys-873-Cys-889, Cys-891-Cys-902, Cys-908-Cys-922, Cys-916-Cys-932, Cys-934-Cys-945, Cys-951-Cys-964, and Cys-958-Cys-974. FAS1 domains are found at residues 988–1118 (YGDI…SQVL) and 1128–1253 (GQGL…SGVL). Asn-1087, Asn-1096, Asn-1170, Asn-1178, Asn-1222, and Asn-1274 each carry an N-linked (GlcNAc...) asparagine glycan. The Laminin EGF-like 1 domain occupies 1327–1392 (TLCEPCPGGL…CDCAHGLCQE (66 aa)). 3 disulfides stabilise this stretch: Cys-1332–Cys-1346, Cys-1340–Cys-1356, and Cys-1358–Cys-1367. Asn-1378 carries an N-linked (GlcNAc...) asparagine glycan. 15 disulfide bridges follow: Cys-1379–Cys-1390, Cys-1383–Cys-1400, Cys-1402–Cys-1411, Cys-1420–Cys-1430, Cys-1424–Cys-1440, Cys-1442–Cys-1453, Cys-1459–Cys-1472, Cys-1466–Cys-1482, Cys-1484–Cys-1495, Cys-1501–Cys-1514, Cys-1508–Cys-1524, Cys-1526–Cys-1538, Cys-1544–Cys-1557, Cys-1551–Cys-1567, and Cys-1569–Cys-1581. 4 consecutive EGF-like domains span residues 1416 to 1454 (TSPQ…IFCS), 1455 to 1496 (EVDP…ELCQ), 1497 to 1539 (EINS…RTCE), and 1540 to 1582 (LLDP…LTCR). N-linked (GlcNAc...) asparagine glycosylation occurs at Asn-1471. FAS1 domains lie at 1582 to 1708 (RARV…DRVL) and 1724 to 1864 (PRRN…DQLL). Asn-1626 and Asn-1727 each carry an N-linked (GlcNAc...) asparagine glycan. Residues 1966–2031 (SECQACPGGP…RCTVHGRCDE (66 aa)) enclose the Laminin EGF-like 2 domain. Intrachain disulfides connect Cys-1971–Cys-1985, Cys-1979–Cys-1995, Cys-1997–Cys-2006, Cys-2018–Cys-2029, Cys-2023–Cys-2039, Cys-2041–Cys-2050, Cys-2060–Cys-2070, Cys-2064–Cys-2076, Cys-2078–Cys-2089, Cys-2095–Cys-2108, Cys-2102–Cys-2117, Cys-2119–Cys-2130, Cys-2136–Cys-2150, Cys-2144–Cys-2160, and Cys-2162–Cys-2173. EGF-like domains lie at 2056–2090 (LQPV…RVCT), 2091–2131 (VADL…WSCR), and 2132–2174 (ARNP…LQCL). Asn-2107 carries N-linked (GlcNAc...) asparagine glycosylation. The region spanning 2206-2301 (RAGVFHLQAT…SERWDAYCFR (96 aa)) is the Link domain. N-linked (GlcNAc...) asparagine glycans are attached at residues Asn-2222, Asn-2261, Asn-2290, Asn-2334, Asn-2347, Asn-2379, Asn-2393, Asn-2400, and Asn-2424. 2 disulfide bridges follow: Cys-2230/Cys-2299 and Cys-2254/Cys-2275. In terms of domain architecture, FAS1 7 spans 2322–2459 (NGKLLDVLAA…GIIHALASPL (138 aa)). Residues 2479-2499 (GVGAVLAAGALLGLVAGALYL) traverse the membrane as a helical segment. Over 2500–2570 (RARGKPMGFG…PDTQRILTVK (71 aa)) the chain is Cytoplasmic.

Interacts with CHID1. High levels found in spleen, lymph node, liver and placenta. Also expressed in endothelial cells.

It is found in the membrane. Its function is as follows. Acts as a scavenger receptor for acetylated low density lipoprotein. Binds to both Gram-positive and Gram-negative bacteria and may play a role in defense against bacterial infection. When inhibited in endothelial tube formation assays, there is a marked decrease in cell-cell interactions, suggesting a role in angiogenesis. Involved in the delivery of newly synthesized CHID1/SI-CLP from the biosynthetic compartment to the endosomal/lysosomal system. In Homo sapiens (Human), this protein is Stabilin-1 (STAB1).